We begin with the raw amino-acid sequence, 676 residues long: UvrABC system protein B (676 aa).

In terms of domain architecture, Helicase ATP-binding spans Glu-26–Val-414. Gly-39–Thr-46 provides a ligand contact to ATP. The short motif at Tyr-92–Val-115 is the Beta-hairpin element. Residues Gln-432–Leu-598 form the Helicase C-terminal domain. The UVR domain occupies Glu-636–Gln-671.

The protein belongs to the UvrB family. Forms a heterotetramer with UvrA during the search for lesions. Interacts with UvrC in an incision complex.

The protein resides in the cytoplasm. Its function is as follows. The UvrABC repair system catalyzes the recognition and processing of DNA lesions. A damage recognition complex composed of 2 UvrA and 2 UvrB subunits scans DNA for abnormalities. Upon binding of the UvrA(2)B(2) complex to a putative damaged site, the DNA wraps around one UvrB monomer. DNA wrap is dependent on ATP binding by UvrB and probably causes local melting of the DNA helix, facilitating insertion of UvrB beta-hairpin between the DNA strands. Then UvrB probes one DNA strand for the presence of a lesion. If a lesion is found the UvrA subunits dissociate and the UvrB-DNA preincision complex is formed. This complex is subsequently bound by UvrC and the second UvrB is released. If no lesion is found, the DNA wraps around the other UvrB subunit that will check the other stand for damage. This chain is UvrABC system protein B, found in Aliivibrio fischeri (strain ATCC 700601 / ES114) (Vibrio fischeri).